Here is a 254-residue protein sequence, read N- to C-terminus: MSLMILSVDGVEFAYKSRQILNNIKFEVKRGEVVSILGVNGAGKSTLLKCINKILKPKRGTILIDNFDIKNLDNLELAKKVGYVPQRAEGNYMTVFDAVLLGRKPHIKWEVSDRDIEITHKVLKLLNLEDYALRYTNELSGGELQKVIIARALVQEPQILLLDEPTNNLDLKNQLEVMKIIMDISKSQNIASIVVMHDLNLALRYSDKFIMLKDGVIYAEGGREVINPENIKAVYGVDAYIENVRGIPVVVPIG.

The ABC transporter domain maps to 6-239; sequence LSVDGVEFAY…NIKAVYGVDA (234 aa). ATP is bound at residue 38-45; that stretch reads GVNGAGKS.

Belongs to the ABC transporter superfamily.

This is an uncharacterized protein from Methanocaldococcus jannaschii (strain ATCC 43067 / DSM 2661 / JAL-1 / JCM 10045 / NBRC 100440) (Methanococcus jannaschii).